The chain runs to 477 residues: Cysteine--tRNA ligase (477 aa).

Residue cysteine 30 coordinates Zn(2+). The 'HIGH' region signature appears at proline 32–histidine 42. Cysteine 209, histidine 234, and glutamate 238 together coordinate Zn(2+). A 'KMSKS' region motif is present at residues lysine 267–serine 271. ATP is bound at residue lysine 270.

Belongs to the class-I aminoacyl-tRNA synthetase family. The cofactor is Zn(2+).

It localises to the cytoplasm. It catalyses the reaction tRNA(Cys) + L-cysteine + ATP = L-cysteinyl-tRNA(Cys) + AMP + diphosphate. The polypeptide is Cysteine--tRNA ligase (Staphylothermus marinus (strain ATCC 43588 / DSM 3639 / JCM 9404 / F1)).